Reading from the N-terminus, the 309-residue chain is Nucleotide-binding protein cgR_1639 (309 aa).

An ATP-binding site is contributed by 32 to 39; sequence GMSGAGLS. 83–86 contributes to the GTP binding site; the sequence is DVRS.

It belongs to the RapZ-like family.

Displays ATPase and GTPase activities. This Corynebacterium glutamicum (strain R) protein is Nucleotide-binding protein cgR_1639.